The primary structure comprises 347 residues: Anthranilate phosphoribosyltransferase (347 aa).

5-phospho-alpha-D-ribose 1-diphosphate-binding positions include G88, 91-92 (GD), T96, 98-101 (NIST), 116-124 (KHGNRSVSS), and S128. Position 88 (G88) interacts with anthranilate. S100 serves as a coordination point for Mg(2+). N119 lines the anthranilate pocket. R174 contacts anthranilate. The Mg(2+) site is built by D232 and E233.

It belongs to the anthranilate phosphoribosyltransferase family. Homodimer. Mg(2+) serves as cofactor.

It carries out the reaction N-(5-phospho-beta-D-ribosyl)anthranilate + diphosphate = 5-phospho-alpha-D-ribose 1-diphosphate + anthranilate. The protein operates within amino-acid biosynthesis; L-tryptophan biosynthesis; L-tryptophan from chorismate: step 2/5. Functionally, catalyzes the transfer of the phosphoribosyl group of 5-phosphorylribose-1-pyrophosphate (PRPP) to anthranilate to yield N-(5'-phosphoribosyl)-anthranilate (PRA). This is Anthranilate phosphoribosyltransferase from Shewanella oneidensis (strain ATCC 700550 / JCM 31522 / CIP 106686 / LMG 19005 / NCIMB 14063 / MR-1).